The chain runs to 988 residues: Next to BRCA1 gene 1 protein (988 aa).

Residues 4–86 (QVTLNVTFKN…NQLQMQVHEG (83 aa)) enclose the PB1 domain. The residue at position 117 (Ser-117) is a Phosphoserine. The disordered stretch occupies residues 126 to 150 (MKTTEEPAPEQCSSAPCDTDQPQDK). The segment at 213-265 (SWHIACSHCQKRIVGVRYQCSLCPSYNICEDCEAGPYTHDTNHVLLKLRRPVV) adopts a ZZ-type zinc-finger fold. Zn(2+) contacts are provided by Cys-218, Cys-221, Cys-232, Cys-235, Cys-241, Cys-244, His-251, and His-255. 2 ATG8 family proteins-binding regions span residues 543 to 637 (ASER…PASV) and 745 to 756 (ASSEDYIIILPE). Phosphothreonine is present on Thr-587. Phosphoserine is present on residues Ser-591, Ser-597, and Ser-626. The interval 611-644 (ESEGAGFKAPPDSTVSAKRKAETPASVEETEEDL) is disordered. Disordered stretches follow at residues 768–822 (MYSS…TSQP) and 841–900 (RSAP…HHNG). The segment covering 795–807 (TEARERLPERESQ) has biased composition (basic and acidic residues). A compositionally biased stretch (polar residues) spans 808–822 (PQEQSISDILTTSQP). Ser-860 carries the post-translational modification Phosphoserine. A UBA domain is found at 935-979 (SEDQTTALMAHLFEMGFCDRQLNLRLLRKHNYNILQVVTELLQVN).

As to quaternary structure, homooligomer and heterooligomer. Interacts with TRIM55. Interacts with titin/TTN. Interacts with RNF29, USP8, MAP1LC3A, MAP1LC3B, MAP1LC3C, GABARAP, GABARAPL1 and GABARAPL2. Binds to ubiquitin and ubiquitinated proteins. Interacts with SQSTM1. Interacts with TAX1BP1. Interacts with IRF3; this interaction mediates autophagic degradation of IRF3. Interacts with IL12A and IL12B. In terms of processing, phosphorylated by GSK3A; this phosphorylation inhibits NBR1 involvement in the formation of ubiquitinated protein aggregates. In terms of tissue distribution, expressed in brain.

The protein localises to the cytoplasm. Its subcellular location is the cytoplasmic vesicle. The protein resides in the autophagosome. It is found in the lysosome. It localises to the myofibril. The protein localises to the sarcomere. Its subcellular location is the m line. In terms of biological role, ubiquitin-binding autophagy adapter that participates in different processes including host defense or intracellular homeostasis. Possesses a double function during the selective autophagy by acting as a shuttle bringing ubiquitinated proteins to autophagosomes and also by participating in the formation of protein aggregates. Plays a role in the regulation of the innate immune response by modulating type I interferon production and targeting ubiquitinated IRF3 for autophagic degradation. In response to oxidative stress, promotes an increase in SQSTM1 levels, phosphorylation, and body formation by preventing its autophagic degradation. In turn, activates the KEAP1-NRF2/NFE2L2 antioxidant pathway. Also plays non-autophagy role by mediating the shuttle of IL-12 to late endosome for subsequent secretion. This is Next to BRCA1 gene 1 protein (Nbr1) from Mus musculus (Mouse).